Reading from the N-terminus, the 457-residue chain is UDP-N-acetylmuramate--L-alanine ligase (457 aa).

118-124 (GTHGKTT) serves as a coordination point for ATP.

Belongs to the MurCDEF family.

Its subcellular location is the cytoplasm. The catalysed reaction is UDP-N-acetyl-alpha-D-muramate + L-alanine + ATP = UDP-N-acetyl-alpha-D-muramoyl-L-alanine + ADP + phosphate + H(+). It functions in the pathway cell wall biogenesis; peptidoglycan biosynthesis. Functionally, cell wall formation. This Clostridium perfringens (strain 13 / Type A) protein is UDP-N-acetylmuramate--L-alanine ligase.